Consider the following 228-residue polypeptide: NAD(P)H-quinone oxidoreductase subunit K, chloroplastic (228 aa).

[4Fe-4S] cluster-binding residues include cysteine 43, cysteine 44, cysteine 108, and cysteine 139.

The protein belongs to the complex I 20 kDa subunit family. NDH is composed of at least 16 different subunits, 5 of which are encoded in the nucleus. Requires [4Fe-4S] cluster as cofactor.

The protein localises to the plastid. It is found in the chloroplast thylakoid membrane. It carries out the reaction a plastoquinone + NADH + (n+1) H(+)(in) = a plastoquinol + NAD(+) + n H(+)(out). The catalysed reaction is a plastoquinone + NADPH + (n+1) H(+)(in) = a plastoquinol + NADP(+) + n H(+)(out). NDH shuttles electrons from NAD(P)H:plastoquinone, via FMN and iron-sulfur (Fe-S) centers, to quinones in the photosynthetic chain and possibly in a chloroplast respiratory chain. The immediate electron acceptor for the enzyme in this species is believed to be plastoquinone. Couples the redox reaction to proton translocation, and thus conserves the redox energy in a proton gradient. This chain is NAD(P)H-quinone oxidoreductase subunit K, chloroplastic, found in Ceratophyllum demersum (Rigid hornwort).